We begin with the raw amino-acid sequence, 521 residues long: Probable cytochrome P450 12d1 distal, mitochondrial (521 aa).

Residues 1–19 constitute a mitochondrion transit peptide; it reads MNTLSSARSVAIYVGPVRS. C467 provides a ligand contact to heme.

This sequence belongs to the cytochrome P450 family. The cofactor is heme.

The protein resides in the mitochondrion membrane. This chain is Probable cytochrome P450 12d1 distal, mitochondrial, found in Drosophila melanogaster (Fruit fly).